The primary structure comprises 202 residues: Probable GTP-binding protein EngB (202 aa).

The region spanning 30–201 is the EngB-type G domain; it reads NILQIALAGR…WERIQYTIDS (172 aa). GTP contacts are provided by residues 38–45, 65–69, 84–87, 151–154, and 180–182; these read GRSNVGKS, GKTRS, DLPG, TKID, and VSS. Mg(2+) is bound by residues S45 and T67.

The protein belongs to the TRAFAC class TrmE-Era-EngA-EngB-Septin-like GTPase superfamily. EngB GTPase family. Mg(2+) is required as a cofactor.

In terms of biological role, necessary for normal cell division and for the maintenance of normal septation. The sequence is that of Probable GTP-binding protein EngB from Lawsonia intracellularis (strain PHE/MN1-00).